We begin with the raw amino-acid sequence, 1171 residues long: ATP-dependent helicase/deoxyribonuclease subunit B (1171 aa).

The region spanning 1 to 390 is the UvrD-like helicase ATP-binding domain; sequence MSLRFVIGRA…HPLVECIRSA (390 aa). 8–15 is an ATP binding site; the sequence is GRAGSGKS. Positions 281-587 constitute a UvrD-like helicase C-terminal domain; that stretch reads MEQPRFHSPA…QFANIPPSLD (307 aa). [4Fe-4S] cluster contacts are provided by C805, C1129, C1132, and C1138.

It belongs to the helicase family. AddB/RexB type 1 subfamily. As to quaternary structure, heterodimer of AddA and AddB. Mg(2+) serves as cofactor. Requires [4Fe-4S] cluster as cofactor.

Functionally, the heterodimer acts as both an ATP-dependent DNA helicase and an ATP-dependent, dual-direction single-stranded exonuclease. Recognizes the chi site generating a DNA molecule suitable for the initiation of homologous recombination. The AddB subunit has 5' -&gt; 3' nuclease activity but not helicase activity. The sequence is that of ATP-dependent helicase/deoxyribonuclease subunit B from Bacillus cereus (strain ATCC 10987 / NRS 248).